A 127-amino-acid chain; its full sequence is Phospholipase A2 homolog otoconin-22 (127 aa).

N-linked (GlcNAc...) asparagine glycosylation is present at asparagine 20. 7 cysteine pairs are disulfide-bonded: cysteine 26/cysteine 120, cysteine 28/cysteine 44, cysteine 43/cysteine 99, cysteine 49/cysteine 127, cysteine 50/cysteine 92, cysteine 59/cysteine 85, and cysteine 78/cysteine 90. N-linked (GlcNAc...) asparagine glycosylation occurs at asparagine 113.

Belongs to the phospholipase A2 family. As to quaternary structure, monomer. In terms of tissue distribution, otoconial membrane in the maculae of the saccule and utricle. Otoconia are composites of proteins and inorganic crystals formed in the peripheral portion of the vestibular system of vertebrates. The otoconial membranes contain small crystals of calcium carbonate known as otoliths (ear stones) if there is a single deposit or as otoconia (ear dust) if there are many. Each mineral polymorph of otoconia has a protein unique to that polymorph.

The protein localises to the secreted. Major protein of the aragonitic otoconia. It is unlikely that this protein has phospholipase A2 activity. The chain is Phospholipase A2 homolog otoconin-22 from Xenopus laevis (African clawed frog).